The primary structure comprises 286 residues: DegV domain-containing protein M6_Spy1658 (286 aa).

A DegV domain is found at 3–282 (FTIMTDSTAD…PNTLAVFVIG (280 aa)). Hexadecanoate contacts are provided by Thr62 and Ser94.

May bind long-chain fatty acids, such as palmitate, and may play a role in lipid transport or fatty acid metabolism. The polypeptide is DegV domain-containing protein M6_Spy1658 (Streptococcus pyogenes serotype M6 (strain ATCC BAA-946 / MGAS10394)).